Reading from the N-terminus, the 940-residue chain is UvrABC system protein A (940 aa).

Position 31–38 (31–38 (GLSGSGKS)) interacts with ATP. A C4-type zinc finger spans residues 253–280 (CPICGYSMRELEPRLFSFNNPAGACPTC). ABC transporter domains lie at 310-587 (WDRR…PESL) and 607-937 (ANPE…RFLK). 640-647 (GVSGSGKS) contributes to the ATP binding site. Residues 740-766 (CEACQGDGVIKVEMHFLPDIYVPCDQC) form a C4-type zinc finger.

Belongs to the ABC transporter superfamily. UvrA family. In terms of assembly, forms a heterotetramer with UvrB during the search for lesions. Interacts with TRCF (Mfd). UvrB and TRCF binding to UvrA could be mutually exclusive.

It is found in the cytoplasm. Its function is as follows. The UvrABC repair system catalyzes the recognition and processing of DNA lesions. UvrA is an ATPase and a DNA-binding protein. A damage recognition complex composed of 2 UvrA and 2 UvrB subunits scans DNA for abnormalities. When the presence of a lesion has been verified by UvrB, the UvrA molecules dissociate. This is UvrABC system protein A from Escherichia coli (strain K12).